A 122-amino-acid chain; its full sequence is Basic phospholipase A2 homolog (122 aa).

Disulfide bonds link Cys-26–Cys-115, Cys-28–Cys-44, Cys-43–Cys-95, Cys-49–Cys-122, Cys-50–Cys-88, Cys-57–Cys-81, and Cys-75–Cys-86. An important for membrane-damaging activities in eukaryotes and bacteria; heparin-binding region spans residues 105 to 117 (KRYMTYPNILCSS).

The protein belongs to the phospholipase A2 family. Group II subfamily. N49 sub-subfamily. As to expression, expressed by the venom gland.

It is found in the secreted. The sequence is that of Basic phospholipase A2 homolog from Gloydius halys (Chinese water mocassin).